A 417-amino-acid polypeptide reads, in one-letter code: Phosphoglycerate kinase (417 aa).

(2R)-3-phosphoglycerate contacts are provided by Val-23, Asp-24, Phe-25, Asn-26, Gln-39, Arg-40, Ser-63, His-64, Gly-66, Arg-67, Leu-122, Arg-123, His-170, and Arg-171. At Ser-203 the chain carries Phosphoserine. Gly-214 is a binding site for ADP. Residue Gly-214 participates in CDP binding. Residues Ala-215 and Lys-216 each coordinate AMP. Ala-215 lines the ATP pocket. Residue Ala-215 coordinates Mg(2+). Asp-219 contacts CDP. Asp-219 is a binding site for Mg(2+). Lys-220 contributes to the AMP binding site. Lys-220 is a binding site for ATP. Position 238 (Gly-238) interacts with ADP. Gly-238 provides a ligand contact to CDP. Residues Ala-239 and Gly-313 each contribute to the AMP site. Residues Ala-239 and Gly-313 each contribute to the ATP site. The CDP site is built by Gly-338 and Phe-343. Position 343 (Phe-343) interacts with ADP. Glu-344 contacts AMP. The ATP site is built by Glu-344, Asp-375, and Thr-376. Position 375 (Asp-375) interacts with Mg(2+).

The protein belongs to the phosphoglycerate kinase family. As to quaternary structure, monomer. Requires Mg(2+) as cofactor. In terms of processing, dephosphorylated by PTC1 and PTC2 at Ser-203; the protein is cytosolic when dephosphorylated.

It localises to the cytoplasm. The protein localises to the cytosol. It is found in the mitochondrion. It carries out the reaction (2R)-3-phosphoglycerate + ATP = (2R)-3-phospho-glyceroyl phosphate + ADP. Its pathway is carbohydrate degradation; glycolysis; pyruvate from D-glyceraldehyde 3-phosphate: step 2/5. Functionally, catalyzes one of the two ATP producing reactions in the glycolytic pathway via the reversible conversion of 1,3-diphosphoglycerate to 3-phosphoglycerate. Both L- and D- forms of purine and pyrimidine nucleotides can be used as substrates, but the activity is much lower on pyrimidines. Negatively regulates the biosynthesis of acetyl-CoA from pyruvate in the mitochondrion and consequently also attenuates aflatoxin production. The polypeptide is Phosphoglycerate kinase (Aspergillus flavus (strain ATCC 200026 / FGSC A1120 / IAM 13836 / NRRL 3357 / JCM 12722 / SRRC 167)).